Reading from the N-terminus, the 348-residue chain is Aspartate carbamoyltransferase catalytic subunit (348 aa).

Arg57 and Thr58 together coordinate carbamoyl phosphate. Residue Lys86 coordinates L-aspartate. 3 residues coordinate carbamoyl phosphate: Arg107, His135, and Gln138. L-aspartate-binding residues include Arg172 and Arg234. 2 residues coordinate carbamoyl phosphate: Leu274 and Pro275.

This sequence belongs to the aspartate/ornithine carbamoyltransferase superfamily. ATCase family. As to quaternary structure, heterododecamer (2C3:3R2) of six catalytic PyrB chains organized as two trimers (C3), and six regulatory PyrI chains organized as three dimers (R2).

The enzyme catalyses carbamoyl phosphate + L-aspartate = N-carbamoyl-L-aspartate + phosphate + H(+). It participates in pyrimidine metabolism; UMP biosynthesis via de novo pathway; (S)-dihydroorotate from bicarbonate: step 2/3. Functionally, catalyzes the condensation of carbamoyl phosphate and aspartate to form carbamoyl aspartate and inorganic phosphate, the committed step in the de novo pyrimidine nucleotide biosynthesis pathway. The sequence is that of Aspartate carbamoyltransferase catalytic subunit from Dichelobacter nodosus (strain VCS1703A).